The chain runs to 318 residues: Transaldolase (318 aa).

Lys-132 acts as the Schiff-base intermediate with substrate in catalysis.

This sequence belongs to the transaldolase family. Type 1 subfamily. In terms of assembly, homodimer.

Its subcellular location is the cytoplasm. It catalyses the reaction D-sedoheptulose 7-phosphate + D-glyceraldehyde 3-phosphate = D-erythrose 4-phosphate + beta-D-fructose 6-phosphate. It functions in the pathway carbohydrate degradation; pentose phosphate pathway; D-glyceraldehyde 3-phosphate and beta-D-fructose 6-phosphate from D-ribose 5-phosphate and D-xylulose 5-phosphate (non-oxidative stage): step 2/3. Functionally, transaldolase is important for the balance of metabolites in the pentose-phosphate pathway. This is Transaldolase from Hamiltonella defensa subsp. Acyrthosiphon pisum (strain 5AT).